The primary structure comprises 143 residues: uncharacterized protein (143 aa).

Residues 1-16 form the signal peptide; sequence MSRNRLFLVAGSLAVA. Residues 114–134 form a helical membrane-spanning segment; the sequence is GAYVFLGPGFTPGSPSGGSGG.

The protein resides in the membrane. This is an uncharacterized protein from Mycobacterium tuberculosis (strain CDC 1551 / Oshkosh).